A 31-amino-acid chain; its full sequence is Protamine-Z (31 aa).

Residues 1-31 (ARRRRSRRASRPVRRRRPRRVSRRRRARRRR) are disordered.

In terms of tissue distribution, testis.

Its subcellular location is the nucleus. It is found in the chromosome. Functionally, protamines substitute for histones in the chromatin of sperm during the haploid phase of spermatogenesis. They compact sperm DNA into a highly condensed, stable and inactive complex. This chain is Protamine-Z, found in Clupea harengus (Atlantic herring).